We begin with the raw amino-acid sequence, 315 residues long: Bifunctional pinoresinol-lariciresinol reductase (315 aa).

NADP(+) contacts are provided by residues 14 to 20 (GGTGYLG), R39, and K48. The Proton acceptor role is filled by K142. R146 serves as a coordination point for NADP(+). Residue H274 participates in substrate binding.

It belongs to the NmrA-type oxidoreductase family. Isoflavone reductase subfamily. In terms of assembly, dimer.

The enzyme catalyses (+)-lariciresinol + NADP(+) = (+)-pinoresinol + NADPH + H(+). It catalyses the reaction (-)-secoisolariciresinol + NADP(+) = (+)-lariciresinol + NADPH + H(+). Its function is as follows. Reductase involved in lignan (-)-hinokinin biosynthesis. Catalyzes the enantioselective conversion of (+)-pinoresinol into (+)-lariciresinol and of (+)-lariciresinol into (-)-secoisolariciresinol. Abstracts the 4R-hydride from the NADPH cofactor during catalysis. Has also a low phenylcoumaran benzylic ether reductase activity. This Linum corymbulosum (Linum) protein is Bifunctional pinoresinol-lariciresinol reductase (PLR_Lc1).